The primary structure comprises 263 residues: Trans-aconitate 2-methyltransferase (263 aa).

The protein belongs to the methyltransferase superfamily. Tam family.

The protein resides in the cytoplasm. The enzyme catalyses trans-aconitate + S-adenosyl-L-methionine = (E)-3-(methoxycarbonyl)pent-2-enedioate + S-adenosyl-L-homocysteine. Functionally, catalyzes the S-adenosylmethionine monomethyl esterification of trans-aconitate. The chain is Trans-aconitate 2-methyltransferase from Mycobacterium ulcerans (strain Agy99).